The sequence spans 232 residues: Large ribosomal subunit protein uL1 (232 aa).

Belongs to the universal ribosomal protein uL1 family. As to quaternary structure, part of the 50S ribosomal subunit.

Functionally, binds directly to 23S rRNA. The L1 stalk is quite mobile in the ribosome, and is involved in E site tRNA release. Its function is as follows. Protein L1 is also a translational repressor protein, it controls the translation of the L11 operon by binding to its mRNA. The sequence is that of Large ribosomal subunit protein uL1 from Paraburkholderia xenovorans (strain LB400).